Consider the following 419-residue polypeptide: Serine/threonine-protein kinase Kist (419 aa).

One can recognise a Protein kinase domain in the interval 23 to 304 (WQVQSRLGSG…AEMALCSPFF (282 aa)). Residues 29-37 (LGSGSSASV) and K54 contribute to the ATP site. Catalysis depends on proton acceptor residues D141 and D158. An RRM domain is found at 324 to 406 (RLLNVLDDDY…KFVVATFYPL (83 aa)).

This sequence belongs to the protein kinase superfamily. Ser/Thr protein kinase family. In terms of assembly, interacts with stathmin and CDKN1B/p27Kip1 Interacts with PAM. As to expression, in the embryo, preferentially expressed in the developing nervous system.

The protein resides in the cytoplasm. It is found in the nucleus. It carries out the reaction L-seryl-[protein] + ATP = O-phospho-L-seryl-[protein] + ADP + H(+). It catalyses the reaction L-threonyl-[protein] + ATP = O-phospho-L-threonyl-[protein] + ADP + H(+). Functionally, upon serum stimulation, phosphorylates CDKN1B/p27Kip1, thus controlling CDKN1B subcellular location and cell cycle progression in G1 phase. May be involved in trafficking and/or processing of RNA. In Rattus norvegicus (Rat), this protein is Serine/threonine-protein kinase Kist (Uhmk1).